The primary structure comprises 493 residues: Zinc finger CCCH domain-containing protein 34 (493 aa).

3 C3H1-type zinc fingers span residues 14 to 43 (RRCN…HADG), 45 to 71 (RFNR…HPPL), and 91 to 118 (VKAA…HEPL). The interval 397 to 477 (MGECPQPANH…SFSDDFEGPK (81 aa)) is disordered. Over residues 409 to 420 (FRGRRKKNRGKQ) the composition is skewed to basic residues. Residues 452-468 (SNSSFSHSTACTPNVRS) are compositionally biased toward polar residues.

The protein is Zinc finger CCCH domain-containing protein 34 of Oryza sativa subsp. japonica (Rice).